The primary structure comprises 105 residues: Large ribosomal subunit protein uL24 (105 aa).

The protein belongs to the universal ribosomal protein uL24 family. Part of the 50S ribosomal subunit.

In terms of biological role, one of two assembly initiator proteins, it binds directly to the 5'-end of the 23S rRNA, where it nucleates assembly of the 50S subunit. One of the proteins that surrounds the polypeptide exit tunnel on the outside of the subunit. In Marinomonas sp. (strain MWYL1), this protein is Large ribosomal subunit protein uL24.